A 353-amino-acid chain; its full sequence is Quinolinate synthase (353 aa).

Residues histidine 47 and serine 68 each coordinate iminosuccinate. A [4Fe-4S] cluster-binding site is contributed by cysteine 113. Residues 139–141 (YAN) and serine 156 contribute to the iminosuccinate site. Residue cysteine 200 coordinates [4Fe-4S] cluster. Iminosuccinate-binding positions include 226–228 (HPE) and threonine 243. Residue cysteine 297 coordinates [4Fe-4S] cluster.

The protein belongs to the quinolinate synthase family. Type 1 subfamily. The cofactor is [4Fe-4S] cluster.

Its subcellular location is the cytoplasm. The enzyme catalyses iminosuccinate + dihydroxyacetone phosphate = quinolinate + phosphate + 2 H2O + H(+). It participates in cofactor biosynthesis; NAD(+) biosynthesis; quinolinate from iminoaspartate: step 1/1. In terms of biological role, catalyzes the condensation of iminoaspartate with dihydroxyacetone phosphate to form quinolinate. The chain is Quinolinate synthase from Yersinia pestis bv. Antiqua (strain Antiqua).